Reading from the N-terminus, the 540-residue chain is Acyl-CoA synthetase 7 (540 aa).

ATP-binding positions include 186-194 (SSGTTGKPK), aspartate 415, arginine 430, and lysine 522. Residues 538 to 540 (AKL) carry the Microbody targeting signal motif.

Belongs to the ATP-dependent AMP-binding enzyme family. As to expression, expressed in intestine.

The protein resides in the peroxisome. It carries out the reaction nonanoate + ATP + CoA = nonanoyl-CoA + AMP + diphosphate. The catalysed reaction is IC-asc-C7 + ATP + CoA = IC-asc-C7-CoA + AMP + diphosphate. The enzyme catalyses IC-asc-C9 + ATP + CoA = IC-asc-C9-CoA + AMP + diphosphate. Plays a role in ascaroside pheromones biosynthesis, which regulates development and behavior. Specifically, activates the side chain of medium-chain indol-3-carbonyl (IC)-ascarosides for shortening through beta-oxidation. Converts IC-asc-C7 and IC-asc-C9 into IC-asc-C7-CoA and IC-asc-C9-CoA, respectively. May play a role in fatty-acid metabolism by activating and converting nonanoate (C9) into nonanoyl-CoA (C9-CoA). This Caenorhabditis elegans protein is Acyl-CoA synthetase 7.